The sequence spans 641 residues: Probable potassium transport system protein Kup 4 (641 aa).

A run of 12 helical transmembrane segments spans residues 31-51 (AALGALGIVYGDLGTSPLYTL), 64-84 (TASALGILSLLVWTLIITISI), 119-139 (ILAVMGLLGAALLYGDGVITP), 155-175 (GSLKPFVMPAAVAILIVFFAA), 183-203 (IGAAFGPIMLLWFLVIAVLGL), 221-241 (AIGFLAHSGGNGMLVLGGVFL), 265-285 (WYAIVLPSLLLSYAGQTALLI), 298-318 (LCPTWGVYPLVFLAMIATIIA), 355-375 (IYVPVVNWMMMVATIGITIAF), 381-401 (LAGAYGTAVSTTMLLTTCLLF), 412-432 (LAVSILIAGLFLIVDVGFFGA), and 437-457 (IAEGGWLPLTFGALVFFLMLT).

This sequence belongs to the HAK/KUP transporter (TC 2.A.72) family.

It localises to the cell inner membrane. It catalyses the reaction K(+)(in) + H(+)(in) = K(+)(out) + H(+)(out). Transport of potassium into the cell. Likely operates as a K(+):H(+) symporter. This is Probable potassium transport system protein Kup 4 from Bradyrhizobium sp. (strain BTAi1 / ATCC BAA-1182).